The chain runs to 607 residues: MAANVFPFRDARAAPDPVLEAGPVAHGPLPVPLVLDNGSFQVRAGWACPGQDPGPEPRLQFRAVCARGRGGARGASGPQVGNALGSLEPLRWMLRSPFDRNVPVNLELQELLLDYSFQHLGVSSQGCVDHPIVLTEAVCNPLYSRQMMSELLFECYGIPKVAYGIDSLFSFYHNKPKNSMCSGLIISSGYQCTHVLPILEGRLDAKNCKRINLGGSQAAGYLQRLLQLKYPGHLAAITLSRMEEILHEHSYIAEDYVEELHKWRCPDYYENNVHKMQLPFSSKLLGSTLTSEEKQERRQQQLRRLQELNARRREEKLQLDQERLDRLLYVQELLEDGQMDQFHKALIELNMDSPEELQSYIQKLSIAVEQAKQKILQAEVNLEVDVVDSKPETPDLEQLEPSLEDVESMNDFDPLFSEETPGVEKPVTTVQPVFNLAAYHQLFVGTERIRAPEIIFQPSLIGEEQAGIAETLQYILDRYPKDIQEMLVQNVFLTGGNTMYPGMKARMEKELLEMRPFRSSFQVQLASNPVLDAWYGARDWALNHLDDNEVWITRKEYEEKGGEYLKEHCASNIYVPIRLPKQASRSSDAQASSKGSAAGGGGAGEQA.

A Glycyl lysine isopeptide (Lys-Gly) (interchain with G-Cter in SUMO2) cross-link involves residue Lys283. Coiled-coil stretches lie at residues 288 to 327 (TLTSEEKQERRQQQLRRLQELNARRREEKLQLDQERLDRL) and 355 to 384 (EELQSYIQKLSIAVEQAKQKILQAEVNLEV). Over residues 584–596 (SRSSDAQASSKGS) the composition is skewed to low complexity. The disordered stretch occupies residues 584-607 (SRSSDAQASSKGSAAGGGGAGEQA). A compositionally biased stretch (gly residues) spans 597-607 (AAGGGGAGEQA).

This sequence belongs to the actin family. ARP5 subfamily. In terms of assembly, component of the chromatin remodeling INO80 complex; specifically part of a complex module associated with the helicase ATP-binding and the helicase C-terminal domain of INO80. Interacts with DDB1. Interacts with ACTR8; the interaction is observed in asynchronous (interphase) cells but not in metaphase-arrested cells indicative for a possible dissociation of the INO80 complex in mitotic cells.

Its subcellular location is the nucleus. The protein resides in the cytoplasm. In terms of biological role, proposed core component of the chromatin remodeling INO80 complex which is involved in transcriptional regulation, DNA replication and probably DNA repair. Involved in DNA double-strand break repair and UV-damage excision repair. This Homo sapiens (Human) protein is Actin-related protein 5 (ACTR5).